We begin with the raw amino-acid sequence, 778 residues long: Glutathione biosynthesis bifunctional protein GshAB (778 aa).

The glutamate--cysteine ligase stretch occupies residues methionine 1 to valine 354. The 257-residue stretch at lysine 521–phenylalanine 777 folds into the ATP-grasp domain. Arginine 548–arginine 606 contacts ATP. Mg(2+) is bound by residues aspartate 728, glutamate 747, and asparagine 749. The Mn(2+) site is built by aspartate 728, glutamate 747, and asparagine 749.

In the N-terminal section; belongs to the glutamate--cysteine ligase type 1 family. Type 2 subfamily. In terms of assembly, monomer. Mg(2+) is required as a cofactor. It depends on Mn(2+) as a cofactor.

The enzyme catalyses L-cysteine + L-glutamate + ATP = gamma-L-glutamyl-L-cysteine + ADP + phosphate + H(+). It catalyses the reaction gamma-L-glutamyl-L-cysteine + glycine + ATP = glutathione + ADP + phosphate + H(+). It functions in the pathway sulfur metabolism; glutathione biosynthesis; glutathione from L-cysteine and L-glutamate: step 1/2. The protein operates within sulfur metabolism; glutathione biosynthesis; glutathione from L-cysteine and L-glutamate: step 2/2. Synthesizes glutathione from L-glutamate and L-cysteine via gamma-L-glutamyl-L-cysteine. The sequence is that of Glutathione biosynthesis bifunctional protein GshAB from Clostridium perfringens (strain 13 / Type A).